We begin with the raw amino-acid sequence, 2113 residues long: Unconventional myosin-VIIb (2113 aa).

Residues 65–760 (QGVDDMIRLG…QDTVLEIRRS (696 aa)) enclose the Myosin motor domain. 158–165 (GESGAGKT) contributes to the ATP binding site. The interval 637 to 659 (LDQLMRILTNCQPYFVRCIKPNE) is actin-binding. 6 IQ domains span residues 745 to 765 (IFLK…ALDG), 763 to 792 (LDGA…AAVT), 786 to 815 (QRRA…GFER), 809 to 838 (ILVG…RIVQ), 832 to 861 (MRQR…AVVI), and 855 to 884 (KRRA…TGPQ). Residue Ser-904 is modified to Phosphoserine. The mediates interaction with ANKS4B stretch occupies residues 962–1578 (EEEVDSLAEY…STQLLSLLAM (617 aa)). The MyTH4 1 domain maps to 989-1189 (HIQKPLRYPL…PTWLELQAVK (201 aa)). The FERM 1 domain maps to 1194–1503 (IPIQVILATG…GGLKERSVFA (310 aa)). The residue at position 1339 (Thr-1339) is a Phosphothreonine. Ser-1368 is modified (phosphoserine). The mediates interaction with CDHR2, CDHR5 and USH1C stretch occupies residues 1497-2113 (KERSVFAMAL…GFRAPAPANP (617 aa)). An SH3 domain is found at 1498–1564 (ERSVFAMALQ…PTACLYTIPS (67 aa)). 2 MyTH4 domains span residues 1641–1790 (YSPE…KAAE) and 1790–1896 (EQNV…LNVT). Phosphoserine is present on Ser-1642. Positions 1796–2099 (LHHEVYLPND…SYVQQLLNTV (304 aa)) constitute an FERM 2 domain.

The protein belongs to the TRAFAC class myosin-kinesin ATPase superfamily. Myosin family. As to quaternary structure, part of the IMAC/intermicrovillar adhesion complex/intermicrovillar tip-link complex composed of ANKS4B, MYO7B, USH1C, CDHR2 and CDHR5. Interacts with CDHR2. Interacts with CDHR5. Interacts with USH1C. Interacts with ANKS4B; requires initial interaction with USH1C. Interacts with CALML4; the interaction mediates the association of CALML4 with the IMAC/intermicrovillar adhesion complex. In terms of tissue distribution, expressed primarily in kidney and intestine. Detected in proximal tubule cells of the kidney and enterocytes of the intestine, specifically the distal tips of apical microvilli on these transporting epithelial cells (at protein level).

The protein localises to the cytoplasm. Its subcellular location is the cytoskeleton. It is found in the cell projection. The protein resides in the microvillus. Functionally, myosins are actin-based motor molecules with ATPase activity. Their highly divergent tails are presumed to bind to membranous compartments, which would be moved relative to actin filaments. As part of the intermicrovillar adhesion complex/IMAC plays a role in epithelial brush border differentiation, controlling microvilli organization and length. May link the complex to the actin core bundle of microvilli. The sequence is that of Unconventional myosin-VIIb (Myo7b) from Mus musculus (Mouse).